We begin with the raw amino-acid sequence, 169 residues long: Co-chaperone protein HscB homolog (169 aa).

Positions 2–74 (NYFDLFSLPV…CLRAQYLLLL (73 aa)) constitute a J domain.

Belongs to the HscB family. As to quaternary structure, interacts with HscA and stimulates its ATPase activity.

Functionally, co-chaperone involved in the maturation of iron-sulfur cluster-containing proteins. Seems to help targeting proteins to be folded toward HscA. This chain is Co-chaperone protein HscB homolog, found in Psychromonas ingrahamii (strain DSM 17664 / CCUG 51855 / 37).